Reading from the N-terminus, the 665-residue chain is Ion-translocating oxidoreductase complex subunit C (665 aa).

2 4Fe-4S ferredoxin-type domains span residues 368–398 (EYAE…QQLY) and 408–437 (KSEE…IQYF). Residues C378, C381, C384, C388, C417, C420, C423, and C427 each contribute to the [4Fe-4S] cluster site. 2 stretches are compositionally biased toward basic and acidic residues: residues 465 to 477 (QARM…ERKA) and 485 to 513 (ARRE…KANE). 3 disordered regions span residues 465–568 (QARM…DAKK), 580–623 (AKKL…LDPK), and 637–665 (KKLA…QIVR). Composition is skewed to polar residues over residues 554–564 (VENQEQQTQPT) and 585–600 (QTNS…QTAE). Residues 602–615 (EVEKTKSAVEKTEE) are compositionally biased toward basic and acidic residues. The segment covering 643-656 (NSTSEAISNSQTAE) has biased composition (polar residues).

It belongs to the 4Fe4S bacterial-type ferredoxin family. RnfC subfamily. The complex is composed of six subunits: RnfA, RnfB, RnfC, RnfD, RnfE and RnfG. [4Fe-4S] cluster serves as cofactor.

The protein localises to the cell inner membrane. Part of a membrane-bound complex that couples electron transfer with translocation of ions across the membrane. This Haemophilus influenzae (strain 86-028NP) protein is Ion-translocating oxidoreductase complex subunit C.